Here is a 208-residue protein sequence, read N- to C-terminus: Protein-L-isoaspartate O-methyltransferase (208 aa).

Serine 59 is a catalytic residue.

This sequence belongs to the methyltransferase superfamily. L-isoaspartyl/D-aspartyl protein methyltransferase family.

It is found in the cytoplasm. The catalysed reaction is [protein]-L-isoaspartate + S-adenosyl-L-methionine = [protein]-L-isoaspartate alpha-methyl ester + S-adenosyl-L-homocysteine. In terms of biological role, catalyzes the methyl esterification of L-isoaspartyl residues in peptides and proteins that result from spontaneous decomposition of normal L-aspartyl and L-asparaginyl residues. It plays a role in the repair and/or degradation of damaged proteins. The sequence is that of Protein-L-isoaspartate O-methyltransferase from Vibrio atlanticus (strain LGP32) (Vibrio splendidus (strain Mel32)).